Reading from the N-terminus, the 301-residue chain is UDP-N-acetylenolpyruvoylglucosamine reductase (301 aa).

In terms of domain architecture, FAD-binding PCMH-type spans 24-190; the sequence is RVGGLAQFYD…VSAQLQLQPG (167 aa). Residue R169 is part of the active site. The Proton donor role is filled by S220. E290 is an active-site residue.

It belongs to the MurB family. The cofactor is FAD.

It is found in the cytoplasm. The catalysed reaction is UDP-N-acetyl-alpha-D-muramate + NADP(+) = UDP-N-acetyl-3-O-(1-carboxyvinyl)-alpha-D-glucosamine + NADPH + H(+). It participates in cell wall biogenesis; peptidoglycan biosynthesis. In terms of biological role, cell wall formation. This is UDP-N-acetylenolpyruvoylglucosamine reductase from Synechococcus sp. (strain ATCC 27144 / PCC 6301 / SAUG 1402/1) (Anacystis nidulans).